Reading from the N-terminus, the 230-residue chain is uncharacterized protein (230 aa).

The region spanning 2 to 69 is the S4 RNA-binding domain; sequence HRLAKIISNA…KPRLWIYYKP (68 aa). Asp102 acts as the Nucleophile in catalysis.

The protein belongs to the pseudouridine synthase RsuA family.

It catalyses the reaction a uridine in RNA = a pseudouridine in RNA. This is an uncharacterized protein from Rickettsia conorii (strain ATCC VR-613 / Malish 7).